Here is a 433-residue protein sequence, read N- to C-terminus: Trigger factor (433 aa).

The region spanning 161–246 (GDRVTMDFVG…AKKVEARDLP (86 aa)) is the PPIase FKBP-type domain.

It belongs to the FKBP-type PPIase family. Tig subfamily.

The protein localises to the cytoplasm. It catalyses the reaction [protein]-peptidylproline (omega=180) = [protein]-peptidylproline (omega=0). Functionally, involved in protein export. Acts as a chaperone by maintaining the newly synthesized protein in an open conformation. Functions as a peptidyl-prolyl cis-trans isomerase. The polypeptide is Trigger factor (Idiomarina loihiensis (strain ATCC BAA-735 / DSM 15497 / L2-TR)).